The primary structure comprises 411 residues: Citrate synthase (411 aa).

Catalysis depends on residues His-304 and Asp-363.

It belongs to the citrate synthase family.

It catalyses the reaction oxaloacetate + acetyl-CoA + H2O = citrate + CoA + H(+). It functions in the pathway carbohydrate metabolism; tricarboxylic acid cycle; isocitrate from oxaloacetate: step 1/2. This is Citrate synthase (gltA) from Rickettsia helvetica.